The primary structure comprises 353 residues: Purine nucleoside phosphorylase (353 aa).

A compositionally biased stretch (polar residues) spans 1–16 (MSKFSYLQNGKASTNG). The disordered stretch occupies residues 1–42 (MSKFSYLQNGKASTNGVPHANGHHQQHQNGHSNGVARNGGTA). Residues Ser-98, His-129, 149–151 (RFH), and Ala-181 each bind phosphate. Glu-266 contributes to the a purine D-ribonucleoside binding site. Ser-285 provides a ligand contact to phosphate. Residue Asn-308 coordinates a purine D-ribonucleoside.

It belongs to the PNP/MTAP phosphorylase family. Homotrimer.

The enzyme catalyses inosine + phosphate = alpha-D-ribose 1-phosphate + hypoxanthine. It catalyses the reaction guanosine + phosphate = alpha-D-ribose 1-phosphate + guanine. It carries out the reaction 2'-deoxyguanosine + phosphate = 2-deoxy-alpha-D-ribose 1-phosphate + guanine. The catalysed reaction is 2'-deoxyinosine + phosphate = 2-deoxy-alpha-D-ribose 1-phosphate + hypoxanthine. The protein operates within purine metabolism; purine nucleoside salvage. Its activity is regulated as follows. Inhibited by 5'-deaza-1'-aza-2c-deoxy-1'-(9-methylene) immucillin-H (DADMe-ImmH). Functionally, as part of the purine salvage pathway, catalyzes the phosphorolytic breakdown of the N-glycosidic bond in the beta-(deoxy)ribonucleoside molecules, with the formation of the corresponding free purine bases and pentose-1-phosphate. Preferentially acts on 2'-deoxyinosine and inosine, and to a lesser extent on 2'-deoxyguanosine and guanosine. Has no activity towards adenosine or 2'-deoxyadenosine. In Anopheles gambiae (African malaria mosquito), this protein is Purine nucleoside phosphorylase.